Here is a 153-residue protein sequence, read N- to C-terminus: MKAVVQRVSRASVRVSGETVGEIGPGLAVLLGVAEGDTEEDAEYLASKIINLRIFSDAEGKFNLSLKDLCREMLVVSQFTLIADTRKGRRPSFIEAAQPQEADGLYNVFIRLCREEGTQVATGQFGAMMMLEIYNDGPVTIILDSRDRLNPRL.

Residues 137-138 carry the Gly-cisPro motif, important for rejection of L-amino acids motif; that stretch reads GP.

This sequence belongs to the DTD family. In terms of assembly, homodimer.

Its subcellular location is the cytoplasm. The enzyme catalyses glycyl-tRNA(Ala) + H2O = tRNA(Ala) + glycine + H(+). It catalyses the reaction a D-aminoacyl-tRNA + H2O = a tRNA + a D-alpha-amino acid + H(+). In terms of biological role, an aminoacyl-tRNA editing enzyme that deacylates mischarged D-aminoacyl-tRNAs. Also deacylates mischarged glycyl-tRNA(Ala), protecting cells against glycine mischarging by AlaRS. Acts via tRNA-based rather than protein-based catalysis; rejects L-amino acids rather than detecting D-amino acids in the active site. By recycling D-aminoacyl-tRNA to D-amino acids and free tRNA molecules, this enzyme counteracts the toxicity associated with the formation of D-aminoacyl-tRNA entities in vivo and helps enforce protein L-homochirality. In Dehalococcoides mccartyi (strain ATCC BAA-2100 / JCM 16839 / KCTC 5957 / BAV1), this protein is D-aminoacyl-tRNA deacylase.